Reading from the N-terminus, the 392-residue chain is 23S rRNA (uracil(747)-C(5))-methyltransferase RlmC (392 aa).

Positions 4, 12, 15, and 93 each coordinate [4Fe-4S] cluster. Glutamine 218, phenylalanine 247, glutamate 275, and asparagine 321 together coordinate S-adenosyl-L-methionine. Cysteine 348 (nucleophile) is an active-site residue.

Belongs to the class I-like SAM-binding methyltransferase superfamily. RNA M5U methyltransferase family. RlmC subfamily.

It catalyses the reaction uridine(747) in 23S rRNA + S-adenosyl-L-methionine = 5-methyluridine(747) in 23S rRNA + S-adenosyl-L-homocysteine + H(+). Catalyzes the formation of 5-methyl-uridine at position 747 (m5U747) in 23S rRNA. This is 23S rRNA (uracil(747)-C(5))-methyltransferase RlmC from Haemophilus influenzae (strain PittEE).